Reading from the N-terminus, the 435-residue chain is 5-methylthioadenosine/S-adenosylhomocysteine deaminase (435 aa).

The Zn(2+) site is built by His-65 and His-67. Glu-94, Arg-150, and His-189 together coordinate substrate. Position 216 (His-216) interacts with Zn(2+). 2 residues coordinate substrate: Glu-219 and Asp-304. Zn(2+) is bound at residue Asp-304.

This sequence belongs to the metallo-dependent hydrolases superfamily. MTA/SAH deaminase family. It depends on Zn(2+) as a cofactor.

The enzyme catalyses S-adenosyl-L-homocysteine + H2O + H(+) = S-inosyl-L-homocysteine + NH4(+). It catalyses the reaction S-methyl-5'-thioadenosine + H2O + H(+) = S-methyl-5'-thioinosine + NH4(+). Functionally, catalyzes the deamination of 5-methylthioadenosine and S-adenosyl-L-homocysteine into 5-methylthioinosine and S-inosyl-L-homocysteine, respectively. Is also able to deaminate adenosine. The protein is 5-methylthioadenosine/S-adenosylhomocysteine deaminase of Bacillus cereus (strain ZK / E33L).